The sequence spans 414 residues: MQLLIPESRIVFASFFIFGLLNNILYVVILSAAIDLVGSATPKATVLLADIIPSFTIKVMAPFFVGLISYRTRIWMLVGLSSFGMLVISLTSDESINAKIVGICMASLSSGLGEVTFLQLTHFYQREYSISGFSSGTGGAGLLGSFVFMLLTNMLGMKVWVVLLLFAVLPLGFLMAFYVMLPKARGGGGDEPGYEALDSLDERSDPSSNASFSSSQTVSLKGHVVSTIKNILPLIRPYMLPLCLVYVSEYIINQGISPTLLFPLDELPHWLFSSYRDIYVVYGFMYQLGVFVSRSSISFGIRIKRLYLLSVLQFANVVITVYQSVHDKPFSSVWLLLALIFYEGLLGGFSYVNTFMSVSEEVSKSKREFSMGCVGISDTFGILLAGCINWSLEPHLCSLQVNRGRDWCLNGGSA.

An N-terminal signal peptide occupies residues 1-33; that stretch reads MQLLIPESRIVFASFFIFGLLNNILYVVILSAA. Transmembrane regions (helical) follow at residues 48–68, 74–94, 100–120, 137–157, and 159–179; these read LADIIPSFTIKVMAPFFVGLI, IWMLVGLSSFGMLVISLTSDE, IVGICMASLSSGLGEVTFLQL, TGGAGLLGSFVFMLLTNMLGM, and VWVVLLLFAVLPLGFLMAFYV. Positions 195-214 are disordered; that stretch reads EALDSLDERSDPSSNASFSS. Helical transmembrane passes span 242–262, 281–301, 306–326, 332–352, and 368–388; these read LCLVYVSEYIINQGISPTLLF, VYGFMYQLGVFVSRSSISFGI, LYLLSVLQFANVVITVYQSVH, SVWLLLALIFYEGLLGGFSYV, and EFSMGCVGISDTFGILLAGCI.

The protein belongs to the battenin family.

It localises to the vacuole membrane. Its function is as follows. Involved in vacuolar transport and vacuole pH homeostasis. Also required for cytokinesis. The protein is Protein BTN1 (BTN1) of Debaryomyces hansenii (strain ATCC 36239 / CBS 767 / BCRC 21394 / JCM 1990 / NBRC 0083 / IGC 2968) (Yeast).